Consider the following 428-residue polypeptide: Enolase (428 aa).

Q165 provides a ligand contact to (2R)-2-phosphoglycerate. The Proton donor role is filled by E207. Residues D244, E285, and D312 each contribute to the Mg(2+) site. K337, R366, S367, and K388 together coordinate (2R)-2-phosphoglycerate. The Proton acceptor role is filled by K337.

It belongs to the enolase family. As to quaternary structure, component of the RNA degradosome, a multiprotein complex involved in RNA processing and mRNA degradation. Mg(2+) is required as a cofactor.

The protein resides in the cytoplasm. It localises to the secreted. Its subcellular location is the cell surface. The enzyme catalyses (2R)-2-phosphoglycerate = phosphoenolpyruvate + H2O. Its pathway is carbohydrate degradation; glycolysis; pyruvate from D-glyceraldehyde 3-phosphate: step 4/5. Catalyzes the reversible conversion of 2-phosphoglycerate (2-PG) into phosphoenolpyruvate (PEP). It is essential for the degradation of carbohydrates via glycolysis. This Coxiella burnetii (strain Dugway 5J108-111) protein is Enolase.